Reading from the N-terminus, the 1045-residue chain is Septation initiation network scaffold protein cdc11 (1045 aa).

The segment covering 1-11 (MEQLWLEHDLS) has biased composition (basic and acidic residues). Disordered stretches follow at residues 1-269 (MEQL…NTKD) and 282-329 (RGRM…PSLS). Polar residues predominate over residues 18-39 (PQEQGSDNSSEPPTTSNVNNTQ). 3 stretches are compositionally biased toward low complexity: residues 40 to 52 (STGRGSSGTSTEH), 96 to 132 (KQSPPSKSPTKNPSKKSSNNSSRRSSSSVGKLSNVSN), and 152 to 165 (ISSSQFSKKYSEGS). The segment covering 166–176 (LKSQQSNTRSN) has biased composition (polar residues). The span at 187–201 (ASNASSSSSVVSSPS) shows a compositional bias: low complexity. 2 stretches are compositionally biased toward polar residues: residues 226–238 (NQLTQDVKSNSFE) and 320–329 (DSSNAFPSLS). Serine 360 is modified (phosphoserine). The disordered stretch occupies residues 377–417 (DVGSSQSSSKTARLNSSPKSTLKTSSVKTRRSHSAQSSRKV). Polar residues predominate over residues 379–403 (GSSQSSSKTARLNSSPKSTLKTSSV). Residue serine 558 is modified to Phosphoserine. 15 LRR repeats span residues 604-625 (RIIQLDISRRHLDSLIGLSELC), 627-646 (SIEELTLEGNEIAYLTGCPV), 647-668 (TIRDLNAVENRLSSLTSFSNLL), 669-690 (NLQYLDISYNQLEDLTGLSSLI), 691-712 (HLRELKVDSNHLWSLDGIQHLD), 713-734 (GLLKLSACNNRIKELSFTNSNL), 736-757 (RLEELLLGNNEIEEIEEISSLQ), 758-779 (NLMVLQLDNNKLTNLKASQPMI), 780-801 (HLRILRISNNAIHQLEVDQFPH), 802-822 (LRTLYMDLNRFNRPPDIRRLK), 846-867 (DIRNLYLSNNTFVTLDCKHMFL), 868-889 (GVRYLELANVQLKEVPKYIATS), 892-913 (NLRVLDLSHNYISDIESLKPLQ), 914-935 (MIHRLYLVGNRIKKMRNLCDIL), and 940-962 (QLNVLDLRMNPLNFNIYPVIDDS). The LRRCT domain maps to 1005 to 1043 (AWRTRRKMYAEAILLACPHLEWLDGSDVSQSSRAAFTKS).

As to quaternary structure, interacts with sid4. When hyperphosphorylated, interacts with byr4. Also interacts with spg1, sid2, cdc13 and cdc16. In terms of processing, phosphorylated by cdc7 and cdk1. Hyperphosphorylated during anaphase. Dephosphorylated by par1.

Its subcellular location is the cytoplasm. The protein localises to the cytoskeleton. It is found in the microtubule organizing center. It localises to the spindle pole body. In terms of biological role, essential for the onset of septum formation. Involved in the organization of astral microtubules during mitosis. Acts as a bridge between sid4 and the other SIN proteins mediating their association with the spindle pole body (SPB). The sid4-cdc11 complex organizes a signaling hub on the SPB which coordinates cell and nuclear division. This chain is Septation initiation network scaffold protein cdc11 (cdc11), found in Schizosaccharomyces pombe (strain 972 / ATCC 24843) (Fission yeast).